The primary structure comprises 277 residues: Large ribosomal subunit protein uL2 (277 aa).

The tract at residues 219 to 277 (TVRGSVMNPNDHPHGGGEGRAPIGRKSPMSPWGKPTLGFKTRKKKNKSDKFIVRRRKNK) is disordered. A compositionally biased stretch (basic residues) spans 258–277 (KTRKKKNKSDKFIVRRRKNK).

Belongs to the universal ribosomal protein uL2 family. As to quaternary structure, part of the 50S ribosomal subunit. Forms a bridge to the 30S subunit in the 70S ribosome.

One of the primary rRNA binding proteins. Required for association of the 30S and 50S subunits to form the 70S ribosome, for tRNA binding and peptide bond formation. It has been suggested to have peptidyltransferase activity; this is somewhat controversial. Makes several contacts with the 16S rRNA in the 70S ribosome. This chain is Large ribosomal subunit protein uL2, found in Bacillus subtilis (strain 168).